The sequence spans 428 residues: Adenylosuccinate synthetase (428 aa).

Residues 11-17 (GDEGKGK) and 39-41 (GHT) contribute to the GTP site. The active-site Proton acceptor is Asp12. 2 residues coordinate Mg(2+): Asp12 and Gly39. IMP-binding positions include 12-15 (DEGK), 37-40 (NAGH), Thr130, Arg144, Asn226, Thr241, and Arg305. Residue His40 is the Proton donor of the active site. Position 301–307 (301–307 (VTTGRKR)) interacts with substrate. GTP-binding positions include Arg307, 333–335 (KLD), and 415–417 (GTG).

This sequence belongs to the adenylosuccinate synthetase family. As to quaternary structure, homodimer. Mg(2+) serves as cofactor.

Its subcellular location is the cytoplasm. It carries out the reaction IMP + L-aspartate + GTP = N(6)-(1,2-dicarboxyethyl)-AMP + GDP + phosphate + 2 H(+). It participates in purine metabolism; AMP biosynthesis via de novo pathway; AMP from IMP: step 1/2. Its function is as follows. Plays an important role in the de novo pathway and in the salvage pathway of purine nucleotide biosynthesis. Catalyzes the first committed step in the biosynthesis of AMP from IMP. The chain is Adenylosuccinate synthetase from Komagataella phaffii (strain GS115 / ATCC 20864) (Yeast).